A 177-amino-acid chain; its full sequence is von Ebner gland protein 2 (177 aa).

The first 18 residues, 1-18 (MKALLLTFSLSLLAALQA), serve as a signal peptide directing secretion. A disulfide bond links cysteine 80 and cysteine 172.

The protein belongs to the calycin superfamily. Lipocalin family. As to quaternary structure, homodimer.

Its subcellular location is the secreted. Functionally, could play a role in taste reception. Could be necessary for the concentration and delivery of sapid molecules in the gustatory system. The polypeptide is von Ebner gland protein 2 (Vegp2) (Rattus norvegicus (Rat)).